Reading from the N-terminus, the 361-residue chain is Phosphoserine aminotransferase (361 aa).

Arginine 42 is a binding site for L-glutamate. Residues 76-77, tryptophan 102, threonine 152, aspartate 172, and glutamine 195 each bind pyridoxal 5'-phosphate; that span reads AT. An N6-(pyridoxal phosphate)lysine modification is found at lysine 196. Position 237-238 (237-238) interacts with pyridoxal 5'-phosphate; the sequence is NT.

The protein belongs to the class-V pyridoxal-phosphate-dependent aminotransferase family. SerC subfamily. As to quaternary structure, homodimer. The cofactor is pyridoxal 5'-phosphate.

It is found in the cytoplasm. It catalyses the reaction O-phospho-L-serine + 2-oxoglutarate = 3-phosphooxypyruvate + L-glutamate. It carries out the reaction 4-(phosphooxy)-L-threonine + 2-oxoglutarate = (R)-3-hydroxy-2-oxo-4-phosphooxybutanoate + L-glutamate. It functions in the pathway amino-acid biosynthesis; L-serine biosynthesis; L-serine from 3-phospho-D-glycerate: step 2/3. The protein operates within cofactor biosynthesis; pyridoxine 5'-phosphate biosynthesis; pyridoxine 5'-phosphate from D-erythrose 4-phosphate: step 3/5. Its function is as follows. Catalyzes the reversible conversion of 3-phosphohydroxypyruvate to phosphoserine and of 3-hydroxy-2-oxo-4-phosphonooxybutanoate to phosphohydroxythreonine. The sequence is that of Phosphoserine aminotransferase from Xanthomonas campestris pv. campestris (strain 8004).